Here is a 100-residue protein sequence, read N- to C-terminus: NADH-quinone oxidoreductase subunit K (100 aa).

The next 3 helical transmembrane spans lie at 4–24, 28–48, and 61–81; these read FEYY…GVII, IIAM…AFVA, and FVFF…GLII.

This sequence belongs to the complex I subunit 4L family. In terms of assembly, NDH-1 is composed of 14 different subunits. Subunits NuoA, H, J, K, L, M, N constitute the membrane sector of the complex.

It localises to the cell inner membrane. The enzyme catalyses a quinone + NADH + 5 H(+)(in) = a quinol + NAD(+) + 4 H(+)(out). Its function is as follows. NDH-1 shuttles electrons from NADH, via FMN and iron-sulfur (Fe-S) centers, to quinones in the respiratory chain. The immediate electron acceptor for the enzyme in this species is believed to be ubiquinone. Couples the redox reaction to proton translocation (for every two electrons transferred, four hydrogen ions are translocated across the cytoplasmic membrane), and thus conserves the redox energy in a proton gradient. The sequence is that of NADH-quinone oxidoreductase subunit K from Sulfurihydrogenibium sp. (strain YO3AOP1).